The chain runs to 539 residues: Dopamine receptor 2 (539 aa).

Residues 1–113 (MVDDNGSSPE…LPNDRVGLLA (113 aa)) are Extracellular-facing. N-linked (GlcNAc...) asparagine glycans are attached at residues asparagine 5, asparagine 31, asparagine 47, and asparagine 68. Residues 114–134 (FLFLFSFATVFGNSLVILAVI) form a helical membrane-spanning segment. The Cytoplasmic segment spans residues 135–145 (RERYLHTATNY). The helical transmembrane segment at 146 to 166 (FITSLAVADCLVGLVVMPFSA) threads the bilayer. The Extracellular portion of the chain corresponds to 167-189 (LYEVLENTWFFGTDWCDIWRSLD). Cysteine 182 and cysteine 261 are oxidised to a cystine. A helical membrane pass occupies residues 190 to 206 (VLFSTASILNLCVISLD). Over 207 to 227 (RYWAITDPFSYPMRMTVKRAA) the chain is Cytoplasmic. A helical transmembrane segment spans residues 228-248 (GLIAAVWICSSAISFPAIVWW). The Extracellular portion of the chain corresponds to 249-266 (RAARDGEMPAYKCTFTEH). The chain crosses the membrane as a helical span at residues 267 to 287 (LGYLVFSSTISFYLPLLVMVF). The Cytoplasmic portion of the chain corresponds to 288 to 420 (TYCRIYRAAV…FAKEKKAAKT (133 aa)). The segment at 326–387 (GGTTRDQQNQ…EPDDEPLSAL (62 aa)) is disordered. Positions 337–352 (SGGGGGGGGGGGGGGS) are enriched in gly residues. A compositionally biased stretch (basic residues) spans 356-367 (SHSHSHHHHHNH). The chain crosses the membrane as a helical span at residues 421 to 441 (LGIVMGVFIICWLPFFVVNLL). Over 442 to 453 (SGFCIECIEHEE) the chain is Extracellular. A helical membrane pass occupies residues 454–474 (IVSAIVTWLGWINSCMNPVIY). The Cytoplasmic portion of the chain corresponds to 475–539 (ACWSRDFRRA…RHNSCEQTYI (65 aa)). S-palmitoyl cysteine attachment occurs at residues cysteine 492 and cysteine 493.

Belongs to the G-protein coupled receptor 1 family. Expressed in both central and peripheral nervous systems.

Its subcellular location is the cell membrane. Receptor for dopamine. The activity of this receptor is mediated by G proteins which activate adenylyl cyclase. Also capable of generating a calcium signal. In terms of antagonist responses, would be classed with the D1-like dopamine receptor group. This receptor is an attractive candidate for initiating biochemical cascades underlying olfactory learning. The polypeptide is Dopamine receptor 2 (Dop1R2) (Drosophila melanogaster (Fruit fly)).